The primary structure comprises 125 residues: MPNIRYTKDHEYIRPDPDGAVVGITDFAQSQLGDVVFVELPVIGAVLARGAEAAVVESVKAASGVNAPASGEVIEVNSALEEKPGLVNEDPNGSGWFFKLTLADPSELDALMDEEAYEAFIKTIA.

The Lipoyl-binding domain maps to 19–101 (GAVVGITDFA…NGSGWFFKLT (83 aa)). An N6-lipoyllysine modification is found at Lys-60.

This sequence belongs to the GcvH family. The glycine cleavage system is composed of four proteins: P, T, L and H. Requires (R)-lipoate as cofactor.

Functionally, the glycine cleavage system catalyzes the degradation of glycine. The H protein shuttles the methylamine group of glycine from the P protein to the T protein. The protein is Glycine cleavage system H protein of Methylocella silvestris (strain DSM 15510 / CIP 108128 / LMG 27833 / NCIMB 13906 / BL2).